Reading from the N-terminus, the 96-residue chain is RNA-binding protein Hfq (96 aa).

The region spanning 9–68 is the Sm domain; that stretch reads DPYLNALRRERIPVSIYLVNGIKLQGQIESFDQFVILLKNTVNQMVYKHAISTVVPARSV. A disordered region spans residues 65 to 96; that stretch reads ARSVSHHNNPQQQQQHSQQTESAAPAAEPQAE. Low complexity predominate over residues 70–96; it reads HHNNPQQQQQHSQQTESAAPAAEPQAE.

Belongs to the Hfq family. In terms of assembly, homohexamer.

Functionally, RNA chaperone that binds small regulatory RNA (sRNAs) and mRNAs to facilitate mRNA translational regulation in response to envelope stress, environmental stress and changes in metabolite concentrations. Also binds with high specificity to tRNAs. This chain is RNA-binding protein Hfq, found in Mannheimia succiniciproducens (strain KCTC 0769BP / MBEL55E).